A 181-amino-acid chain; its full sequence is Photosystem I assembly protein Ycf4 (181 aa).

Transmembrane regions (helical) follow at residues 19-41 (YFWAVFLCSGGISFLLAGISSYF) and 61-83 (LVMSFYGTLSIALAIYILGTLFW).

It belongs to the Ycf4 family.

It is found in the plastid. The protein resides in the chloroplast thylakoid membrane. In terms of biological role, seems to be required for the assembly of the photosystem I complex. The sequence is that of Photosystem I assembly protein Ycf4 from Trieres chinensis (Marine centric diatom).